The chain runs to 193 residues: dCTP deaminase (193 aa).

Residues 110 to 115 (RSSLAR), aspartate 128, 136 to 138 (VLE), tyrosine 171, lysine 178, and glutamine 182 each bind dCTP. Catalysis depends on glutamate 138, which acts as the Proton donor/acceptor. The disordered stretch occupies residues 169-193 (RPYNRRQDAKYKDQQGAVASRIDKD).

Belongs to the dCTP deaminase family. In terms of assembly, homotrimer.

The enzyme catalyses dCTP + H2O + H(+) = dUTP + NH4(+). Its pathway is pyrimidine metabolism; dUMP biosynthesis; dUMP from dCTP (dUTP route): step 1/2. Functionally, catalyzes the deamination of dCTP to dUTP. This chain is dCTP deaminase, found in Pectobacterium atrosepticum (strain SCRI 1043 / ATCC BAA-672) (Erwinia carotovora subsp. atroseptica).